Here is a 270-residue protein sequence, read N- to C-terminus: A-type potassium channel modulatory protein KCNIP2 (270 aa).

The span at 1 to 17 (MRGQGRKESLSESRDLD) shows a compositional bias: basic and acidic residues. Residues 1–34 (MRGQGRKESLSESRDLDGSYDQLTGHPPGPSKKA) form a disordered region. Ser-9 bears the Phosphoserine mark. S-palmitoyl cysteine attachment occurs at residues Cys-45 and Cys-46. An EF-hand 1; degenerate domain is found at 81–137 (FELSTVCHRPEGLEQLQEQTKFTRRELQVLYRGFKNECPSGIVNEENFKQIYSQFFP). 3 consecutive EF-hand domains span residues 140–175 (DSSN…ILRG), 176–211 (TIDD…IYDM), and 224–259 (APRE…DENI). Ca(2+) is bound by residues Asp-153, Asn-155, Asp-157, Ser-159, Asp-164, Asp-189, Asn-191, Asp-193, Cys-195, Glu-200, Asp-237, Asn-239, Asp-241, and Glu-248. The interval 257–270 (ENIMRSMQLFDNVI) is interaction with KCND2.

This sequence belongs to the recoverin family. Component of heteromultimeric potassium channels. Identified in potassium channel complexes containing KCND1, KCND2, KCND3, KCNIP1, KCNIP2, KCNIP3, KCNIP4, DPP6 and DPP10. The KCND2-KCNIP2 channel complex contains four KCND2 and four KCNIP2 subunits. Interacts with KCND2. Probably part of a complex consisting of KCNIP1, KCNIP2 isoform 3 and KCND2. At least isoform 2 and isoform 3 can self-associate to form homodimers and homotetramers. Isoform 3 interacts with KCNIP1 in a calcium-dependent manner. Interacts with KCND3; each KCNIP2 monomer interacts with two adjacent KCND3 subunits, through both the N-terminal inactivation ball of a KCND3 subunit and a C-terminal helix from the adjacent KCND3 subunit, clamping them together; this interaction modulates the channel gating kinetics. In terms of processing, palmitoylated. Palmitoylation enhances association with the plasma membrane. As to expression, expressed in heart, brain and lung. In brain, abundantly expressed in striatum, hippocampus and olfactory bulb, moderately expressed in cerebral cortex and lowly expressed in thalamus and hypothalamus. Isoform 1 is predominant in cerebral cortex, striatum and hippocampus. Isoform 1, isoform 2 and isoform 3 are equally expressed in olfactory bulb. Iisoform 3 is expressed at high levels and isoform 1 at low levels in heart (in PubMed:11263977).

Its subcellular location is the cell membrane. In terms of biological role, regulatory subunit of Kv4/D (Shal)-type voltage-gated rapidly inactivating A-type potassium channels. Modulates channel density, inactivation kinetics and rate of recovery from inactivation in a calcium-dependent and isoform-specific manner. Involved in KCND2 and KCND3 trafficking to the cell surface. Essential for the expression of I(To) currents in the heart. Required for normal protein levels of KCND2 in the heart ventricle. This Rattus norvegicus (Rat) protein is A-type potassium channel modulatory protein KCNIP2.